The following is a 155-amino-acid chain: Small ribosomal subunit protein uS7 (155 aa).

It belongs to the universal ribosomal protein uS7 family. As to quaternary structure, part of the 30S ribosomal subunit. Contacts proteins S9 and S11.

One of the primary rRNA binding proteins, it binds directly to 16S rRNA where it nucleates assembly of the head domain of the 30S subunit. Is located at the subunit interface close to the decoding center, probably blocks exit of the E-site tRNA. The protein is Small ribosomal subunit protein uS7 of Lactococcus lactis subsp. lactis (strain IL1403) (Streptococcus lactis).